The chain runs to 273 residues: Glutamate racemase (273 aa).

Substrate-binding positions include 17–18 (DS) and 49–50 (YG). Catalysis depends on cysteine 80, which acts as the Proton donor/acceptor. 81 to 82 (NT) lines the substrate pocket. The active-site Proton donor/acceptor is cysteine 190. A substrate-binding site is contributed by 191 to 192 (TH).

This sequence belongs to the aspartate/glutamate racemases family.

The catalysed reaction is L-glutamate = D-glutamate. It functions in the pathway cell wall biogenesis; peptidoglycan biosynthesis. Provides the (R)-glutamate required for cell wall biosynthesis. This Corynebacterium glutamicum (strain ATCC 13032 / DSM 20300 / JCM 1318 / BCRC 11384 / CCUG 27702 / LMG 3730 / NBRC 12168 / NCIMB 10025 / NRRL B-2784 / 534) protein is Glutamate racemase.